A 777-amino-acid polypeptide reads, in one-letter code: Penicillin-binding protein 1B (777 aa).

Topologically, residues 1–30 (MTRKSSNRSRGRKARSGKSASSSKLQIWLG) are cytoplasmic. The helical; Signal-anchor for type II membrane protein transmembrane segment at 31–52 (RIWSIGWKLALTLAAVLVFIGI) threads the bilayer. Over 53-777 (YLDSMIKQRF…TEWIKKLFEW (725 aa)) the chain is Periplasmic. Residues 162–334 (LRLEPKLMGM…SYYNPMRYAE (173 aa)) are transglycosylase. Glutamate 200 acts as the Proton donor; for transglycosylase activity in catalysis. The transpeptidase stretch occupies residues 415–709 (SKLEQAIHDQ…ASGALRVYAQ (295 aa)). Serine 476 (acyl-ester intermediate; for transpeptidase activity) is an active-site residue.

This sequence in the N-terminal section; belongs to the glycosyltransferase 51 family. It in the C-terminal section; belongs to the transpeptidase family.

The protein resides in the cell inner membrane. The enzyme catalyses [GlcNAc-(1-&gt;4)-Mur2Ac(oyl-L-Ala-gamma-D-Glu-L-Lys-D-Ala-D-Ala)](n)-di-trans,octa-cis-undecaprenyl diphosphate + beta-D-GlcNAc-(1-&gt;4)-Mur2Ac(oyl-L-Ala-gamma-D-Glu-L-Lys-D-Ala-D-Ala)-di-trans,octa-cis-undecaprenyl diphosphate = [GlcNAc-(1-&gt;4)-Mur2Ac(oyl-L-Ala-gamma-D-Glu-L-Lys-D-Ala-D-Ala)](n+1)-di-trans,octa-cis-undecaprenyl diphosphate + di-trans,octa-cis-undecaprenyl diphosphate + H(+). The catalysed reaction is Preferential cleavage: (Ac)2-L-Lys-D-Ala-|-D-Ala. Also transpeptidation of peptidyl-alanyl moieties that are N-acyl substituents of D-alanine.. It participates in cell wall biogenesis; peptidoglycan biosynthesis. Functionally, cell wall formation. Synthesis of cross-linked peptidoglycan from the lipid intermediates. The enzyme has a penicillin-insensitive transglycosylase N-terminal domain (formation of linear glycan strands) and a penicillin-sensitive transpeptidase C-terminal domain (cross-linking of the peptide subunits). This Vibrio cholerae serotype O1 (strain ATCC 39315 / El Tor Inaba N16961) protein is Penicillin-binding protein 1B (mrcB).